A 299-amino-acid chain; its full sequence is GTPase Era (299 aa).

An Era-type G domain is found at 5–172; the sequence is KSGFVSIIGR…IDVLKTYLPE (168 aa). The interval 13–20 is G1; sequence GRPNVGKS. 13-20 is a binding site for GTP; that stretch reads GRPNVGKS. A G2 region spans residues 39-43; sequence QTTRN. The segment at 60-63 is G3; the sequence is DTPG. Residues 60–64 and 122–125 each bind GTP; these read DTPGI and NKID. The interval 122 to 125 is G4; that stretch reads NKID. Positions 151 to 153 are G5; the sequence is ISA. The KH type-2 domain maps to 203–280; sequence TSEEIPHAIG…YLELWVKVQR (78 aa).

The protein belongs to the TRAFAC class TrmE-Era-EngA-EngB-Septin-like GTPase superfamily. Era GTPase family. In terms of assembly, monomer.

It is found in the cytoplasm. The protein resides in the cell membrane. In terms of biological role, an essential GTPase that binds both GDP and GTP, with rapid nucleotide exchange. Plays a role in 16S rRNA processing and 30S ribosomal subunit biogenesis and possibly also in cell cycle regulation and energy metabolism. The sequence is that of GTPase Era from Staphylococcus aureus (strain NCTC 8325 / PS 47).